The sequence spans 300 residues: Phosphoribosylaminoimidazole-succinocarboxamide synthase (300 aa).

It belongs to the SAICAR synthetase family.

It catalyses the reaction 5-amino-1-(5-phospho-D-ribosyl)imidazole-4-carboxylate + L-aspartate + ATP = (2S)-2-[5-amino-1-(5-phospho-beta-D-ribosyl)imidazole-4-carboxamido]succinate + ADP + phosphate + 2 H(+). Its pathway is purine metabolism; IMP biosynthesis via de novo pathway; 5-amino-1-(5-phospho-D-ribosyl)imidazole-4-carboxamide from 5-amino-1-(5-phospho-D-ribosyl)imidazole-4-carboxylate: step 1/2. The chain is Phosphoribosylaminoimidazole-succinocarboxamide synthase from Methylibium petroleiphilum (strain ATCC BAA-1232 / LMG 22953 / PM1).